Consider the following 366-residue polypeptide: Probable dual-specificity RNA methyltransferase RlmN (366 aa).

The active-site Proton acceptor is Glu-108. A Radical SAM core domain is found at 114-352 (YSDRSTLCIS…CTVRDTKGQE (239 aa)). Cys-121 and Cys-357 form a disulfide bridge. 3 residues coordinate [4Fe-4S] cluster: Cys-128, Cys-132, and Cys-135. S-adenosyl-L-methionine is bound by residues 178–179 (GE), Ser-212, 235–237 (SLH), and Asn-314. Catalysis depends on Cys-357, which acts as the S-methylcysteine intermediate.

It belongs to the radical SAM superfamily. RlmN family. Requires [4Fe-4S] cluster as cofactor.

Its subcellular location is the cytoplasm. The enzyme catalyses adenosine(2503) in 23S rRNA + 2 reduced [2Fe-2S]-[ferredoxin] + 2 S-adenosyl-L-methionine = 2-methyladenosine(2503) in 23S rRNA + 5'-deoxyadenosine + L-methionine + 2 oxidized [2Fe-2S]-[ferredoxin] + S-adenosyl-L-homocysteine. The catalysed reaction is adenosine(37) in tRNA + 2 reduced [2Fe-2S]-[ferredoxin] + 2 S-adenosyl-L-methionine = 2-methyladenosine(37) in tRNA + 5'-deoxyadenosine + L-methionine + 2 oxidized [2Fe-2S]-[ferredoxin] + S-adenosyl-L-homocysteine. Its function is as follows. Specifically methylates position 2 of adenine 2503 in 23S rRNA and position 2 of adenine 37 in tRNAs. The protein is Probable dual-specificity RNA methyltransferase RlmN of Corynebacterium glutamicum (strain ATCC 13032 / DSM 20300 / JCM 1318 / BCRC 11384 / CCUG 27702 / LMG 3730 / NBRC 12168 / NCIMB 10025 / NRRL B-2784 / 534).